Consider the following 368-residue polypeptide: Reverse transcriptase-like protein (368 aa).

Residues 91–318 (TRELTVPYWY…SELNWLGHKV (228 aa)) form the Reverse transcriptase domain.

The protein resides in the mitochondrion. This Chlamydomonas reinhardtii (Chlamydomonas smithii) protein is Reverse transcriptase-like protein (RTL).